The sequence spans 917 residues: Translation initiation factor IF-2 (917 aa).

Disordered regions lie at residues 1–84 and 150–318; these read MSDG…GRAG and KESE…DRER. A compositionally biased stretch (polar residues) spans 10–27; sequence DGNNTPSQGGEQTRSSRL. Composition is skewed to low complexity over residues 69–84, 154–177, and 227–236; these read AAGP…GRAG, QQAA…AAEA, and SRPAAAAPAR. The span at 265-274 shows a compositional bias: pro residues; it reads GAPPAPPRRP. A compositionally biased stretch (basic and acidic residues) spans 282–305; the sequence is GGSDRRSGRIDVRAAIEGDDDKTR. A tr-type G domain is found at 416 to 586; it reads PRAPVVTVMG…LLQSEMLDLK (171 aa). The tract at residues 425-432 is G1; it reads GHVDHGKT. 425–432 is a binding site for GTP; sequence GHVDHGKT. Residues 450 to 454 are G2; that stretch reads GITQH. The interval 472 to 475 is G3; it reads DTPG. Residues 472 to 476 and 526 to 529 each bind GTP; these read DTPGH and NKID. The segment at 526-529 is G4; the sequence is NKID. Residues 562-564 form a G5 region; sequence SAL.

Belongs to the TRAFAC class translation factor GTPase superfamily. Classic translation factor GTPase family. IF-2 subfamily.

The protein resides in the cytoplasm. One of the essential components for the initiation of protein synthesis. Protects formylmethionyl-tRNA from spontaneous hydrolysis and promotes its binding to the 30S ribosomal subunits. Also involved in the hydrolysis of GTP during the formation of the 70S ribosomal complex. The protein is Translation initiation factor IF-2 of Gluconobacter oxydans (strain 621H) (Gluconobacter suboxydans).